A 79-amino-acid polypeptide reads, in one-letter code: Conotoxin TsMSGL-2 (79 aa).

The first 24 residues, 1 to 24 (MSGLGIMVLTLLLLVFMATSHQDA), serve as a signal peptide directing secretion. Residues 25 to 46 (GEKQATQRDAVNVRRRRSIAGR) constitute a propeptide that is removed on maturation. 3 cysteine pairs are disulfide-bonded: Cys52–Cys64, Cys56–Cys73, and Cys63–Cys77. At Leu78 the chain carries Leucine amide.

This sequence belongs to the conotoxin O3 superfamily. In terms of tissue distribution, expressed by the venom duct.

The protein localises to the secreted. The protein is Conotoxin TsMSGL-2 of Conus tessulatus (Tessellate cone).